The sequence spans 286 residues: 4-diphosphocytidyl-2-C-methyl-D-erythritol kinase (286 aa).

Lysine 11 is an active-site residue. An ATP-binding site is contributed by 93–103; the sequence is PFGAGLGGGSS. Aspartate 135 is an active-site residue.

Belongs to the GHMP kinase family. IspE subfamily.

The enzyme catalyses 4-CDP-2-C-methyl-D-erythritol + ATP = 4-CDP-2-C-methyl-D-erythritol 2-phosphate + ADP + H(+). It participates in isoprenoid biosynthesis; isopentenyl diphosphate biosynthesis via DXP pathway; isopentenyl diphosphate from 1-deoxy-D-xylulose 5-phosphate: step 3/6. Its function is as follows. Catalyzes the phosphorylation of the position 2 hydroxy group of 4-diphosphocytidyl-2C-methyl-D-erythritol. The protein is 4-diphosphocytidyl-2-C-methyl-D-erythritol kinase of Chlorobaculum parvum (strain DSM 263 / NCIMB 8327) (Chlorobium vibrioforme subsp. thiosulfatophilum).